We begin with the raw amino-acid sequence, 522 residues long: Glutamate--cysteine ligase (522 aa).

The protein belongs to the glutamate--cysteine ligase type 1 family. Type 1 subfamily.

It carries out the reaction L-cysteine + L-glutamate + ATP = gamma-L-glutamyl-L-cysteine + ADP + phosphate + H(+). It participates in sulfur metabolism; glutathione biosynthesis; glutathione from L-cysteine and L-glutamate: step 1/2. This is Glutamate--cysteine ligase from Vibrio campbellii (strain ATCC BAA-1116).